The sequence spans 160 residues: SsrA-binding protein (160 aa).

Belongs to the SmpB family.

The protein localises to the cytoplasm. Its function is as follows. Required for rescue of stalled ribosomes mediated by trans-translation. Binds to transfer-messenger RNA (tmRNA), required for stable association of tmRNA with ribosomes. tmRNA and SmpB together mimic tRNA shape, replacing the anticodon stem-loop with SmpB. tmRNA is encoded by the ssrA gene; the 2 termini fold to resemble tRNA(Ala) and it encodes a 'tag peptide', a short internal open reading frame. During trans-translation Ala-aminoacylated tmRNA acts like a tRNA, entering the A-site of stalled ribosomes, displacing the stalled mRNA. The ribosome then switches to translate the ORF on the tmRNA; the nascent peptide is terminated with the 'tag peptide' encoded by the tmRNA and targeted for degradation. The ribosome is freed to recommence translation, which seems to be the essential function of trans-translation. The sequence is that of SsrA-binding protein from Salmonella agona (strain SL483).